Here is a 757-residue protein sequence, read N- to C-terminus: Myb-related protein A (757 aa).

3 consecutive HTH myb-type domains span residues 30–81 (KKIC…QKVL), 82–137 (NPEL…NPEV), and 138–188 (KKSS…RRKV). 3 DNA-binding regions (H-T-H motif) span residues 58 to 81 (WAFI…QKVL), 110 to 133 (WSLI…HNHL), and 161 to 184 (WAEI…NSTM). A disordered region spans residues 187–209 (KVEQEGYLQDGTKSSSERTGSST). Positions 197-209 (GTKSSSERTGSST) are enriched in polar residues. The segment at 235 to 300 (IPVYQYASPE…RLSSQAGSLP (66 aa)) is transcriptional activation domain. Residues 303–558 (SGSFVMEDCV…IRRSLLGSTP (256 aa)) are negative regulatory domain.

Component of the DREAM complex. Expressed ubiquitously.

The protein localises to the nucleus. Its function is as follows. Strong transcriptional activator; DNA-binding protein that specifically recognize the sequence 5'-YAAC[GT]G-3'. Could have a role in the proliferation and/or differentiation of neurogenic, spermatogenic and B-lymphoid cells. The sequence is that of Myb-related protein A (MYBL1) from Gallus gallus (Chicken).